The chain runs to 265 residues: Undecaprenyl-diphosphatase (265 aa).

7 helical membrane-spanning segments follow: residues 38–58 (RSDF…CLAL), 75–95 (RDYV…GLIV), 108–128 (PVAW…HFAG), 135–155 (VVTW…GVFP), 181–201 (FVFM…LLEM), 215–235 (VAVA…WLLG), and 244–264 (VFAV…PAAA).

It belongs to the UppP family.

It is found in the cell inner membrane. The enzyme catalyses di-trans,octa-cis-undecaprenyl diphosphate + H2O = di-trans,octa-cis-undecaprenyl phosphate + phosphate + H(+). Its function is as follows. Catalyzes the dephosphorylation of undecaprenyl diphosphate (UPP). Confers resistance to bacitracin. The chain is Undecaprenyl-diphosphatase from Xanthomonas euvesicatoria pv. vesicatoria (strain 85-10) (Xanthomonas campestris pv. vesicatoria).